Reading from the N-terminus, the 550-residue chain is Transcriptional repressor RHIT (550 aa).

Disordered regions lie at residues 1 to 67, 174 to 200, and 216 to 296; these read MSAD…ETRA, VQGK…VVEV, and KSFK…EGLA. Basic and acidic residues-rich tracts occupy residues 11–22, 45–58, and 187–200; these read AQDKERARETPG, ESPH…EPHP, and LGHE…VVEV. One can recognise a KRAB domain in the interval 124–193; that stretch reads VTFEDMALYL…SRQLGHEEEE (70 aa). Lysine 216 participates in a covalent cross-link: Glycyl lysine isopeptide (Lys-Gly) (interchain with G-Cter in SUMO2). The segment covering 267–281 has biased composition (basic and acidic residues); it reads DLPKTQEGHFPEQPR. Serine 290 carries the post-translational modification Phosphoserine. 8 consecutive C2H2-type zinc fingers follow at residues 306–328, 334–356, 362–384, 390–412, 418–440, 446–468, 474–496, and 502–524; these read YKCE…RRTH, YACT…QIIH, YTCP…QRIH, YVCD…QGTH, HKCP…QRTH, YPCP…NRTH, YHCL…QRTH, and YSCP…EKIH.

The protein belongs to the krueppel C2H2-type zinc-finger protein family.

It is found in the nucleus. Transcriptional repressor involved in regulating MPV17L expression. By regulating MPV17L expression, contributes to the regulation of genes involved in H(2)O(2) metabolism and the mitochondrial apoptotic cascade. In Bos taurus (Bovine), this protein is Transcriptional repressor RHIT (ZNF205).